A 620-amino-acid chain; its full sequence is Chaperone protein HscA homolog (620 aa).

Belongs to the heat shock protein 70 family.

In terms of biological role, chaperone involved in the maturation of iron-sulfur cluster-containing proteins. Has a low intrinsic ATPase activity which is markedly stimulated by HscB. The polypeptide is Chaperone protein HscA homolog (Paracidovorax citrulli (strain AAC00-1) (Acidovorax citrulli)).